Here is a 621-residue protein sequence, read N- to C-terminus: Threonine--tRNA ligase (621 aa).

Residues 1 to 137 (MRILQLHCDS…ESSKVVTKDS (137 aa)) are editing domain. The segment at 128–150 (ESSKVVTKDSTTKDDDEDTSDAL) is disordered. The interval 202–501 (PHVALMKKLA…SKKGKKPQLP (300 aa)) is catalytic. Cysteine 294, histidine 346, and histidine 470 together coordinate Zn(2+). The span at 598-612 (QTSGKPYTGLNQSQH) shows a compositional bias: polar residues. The tract at residues 598–621 (QTSGKPYTGLNQSQHLSKRPQLMV) is disordered.

The protein belongs to the class-II aminoacyl-tRNA synthetase family. Homodimer. Zn(2+) is required as a cofactor.

The protein resides in the cytoplasm. The catalysed reaction is tRNA(Thr) + L-threonine + ATP = L-threonyl-tRNA(Thr) + AMP + diphosphate + H(+). In terms of biological role, catalyzes the attachment of threonine to tRNA(Thr) in a two-step reaction: L-threonine is first activated by ATP to form Thr-AMP and then transferred to the acceptor end of tRNA(Thr). Also edits incorrectly charged L-seryl-tRNA(Thr). The sequence is that of Threonine--tRNA ligase from Nitrosopumilus maritimus (strain SCM1).